We begin with the raw amino-acid sequence, 174 residues long: Alkyl hydroperoxide reductase AhpD (174 aa).

Residue cysteine 130 is the Proton donor of the active site. Residues cysteine 130 and cysteine 133 are joined by a disulfide bond. The active-site Cysteine sulfenic acid (-SOH) intermediate is cysteine 133.

This sequence belongs to the AhpD family. As to quaternary structure, homotrimer.

It catalyses the reaction N(6)-[(R)-dihydrolipoyl]-L-lysyl-[lipoyl-carrier protein] + a hydroperoxide = N(6)-[(R)-lipoyl]-L-lysyl-[lipoyl-carrier protein] + an alcohol + H2O. Functionally, antioxidant protein with alkyl hydroperoxidase activity. Required for the reduction of the AhpC active site cysteine residues and for the regeneration of the AhpC enzyme activity. The protein is Alkyl hydroperoxide reductase AhpD of Corynebacterium kroppenstedtii (strain DSM 44385 / JCM 11950 / CIP 105744 / CCUG 35717).